Consider the following 230-residue polypeptide: Nucleoside diphosphate kinase 2, chloroplastic (230 aa).

The transit peptide at 1–64 (MEAMAVFSGS…SYPKTFRTRS (64 aa)) directs the protein to the chloroplast. Residues K90, F138, R166, T172, R183, and N193 each contribute to the ATP site. H196 (pros-phosphohistidine intermediate) is an active-site residue.

Belongs to the NDK family. The cofactor is Mg(2+).

It localises to the plastid. The protein localises to the chloroplast. It catalyses the reaction a 2'-deoxyribonucleoside 5'-diphosphate + ATP = a 2'-deoxyribonucleoside 5'-triphosphate + ADP. The catalysed reaction is a ribonucleoside 5'-diphosphate + ATP = a ribonucleoside 5'-triphosphate + ADP. Major role in the synthesis of nucleoside triphosphates other than ATP. The ATP gamma phosphate is transferred to the NDP beta phosphate via a ping-pong mechanism, using a phosphorylated active-site intermediate. This is Nucleoside diphosphate kinase 2, chloroplastic (NDPK2) from Pisum sativum (Garden pea).